Reading from the N-terminus, the 369-residue chain is DNA replication and repair protein RecF (369 aa).

Position 30–37 (30–37 (GQNAQGKT)) interacts with ATP.

This sequence belongs to the RecF family.

The protein resides in the cytoplasm. The RecF protein is involved in DNA metabolism; it is required for DNA replication and normal SOS inducibility. RecF binds preferentially to single-stranded, linear DNA. It also seems to bind ATP. This Acetivibrio thermocellus (strain ATCC 27405 / DSM 1237 / JCM 9322 / NBRC 103400 / NCIMB 10682 / NRRL B-4536 / VPI 7372) (Clostridium thermocellum) protein is DNA replication and repair protein RecF.